The primary structure comprises 357 residues: DNA primase small subunit PriS (357 aa).

Active-site residues include Asp-105, Asp-107, and Asp-259.

The protein belongs to the eukaryotic-type primase small subunit family. As to quaternary structure, heterodimer of a small subunit (PriS) and a large subunit (PriL). The cofactor is Mg(2+). Mn(2+) is required as a cofactor.

Catalytic subunit of DNA primase, an RNA polymerase that catalyzes the synthesis of short RNA molecules used as primers for DNA polymerase during DNA replication. The small subunit contains the primase catalytic core and has DNA synthesis activity on its own. Binding to the large subunit stabilizes and modulates the activity, increasing the rate of DNA synthesis while decreasing the length of the DNA fragments, and conferring RNA synthesis capability. The DNA polymerase activity may enable DNA primase to also catalyze primer extension after primer synthesis. May also play a role in DNA repair. The protein is DNA primase small subunit PriS of Methanococcus maripaludis (strain C6 / ATCC BAA-1332).